We begin with the raw amino-acid sequence, 338 residues long: Holliday junction branch migration complex subunit RuvB (338 aa).

Positions 1 to 181 are large ATPase domain (RuvB-L); it reads MERAITPEKR…FGVISRLEFY (181 aa). ATP is bound by residues leucine 20, arginine 21, glycine 62, lysine 65, threonine 66, threonine 67, 128–130, arginine 171, tyrosine 181, and arginine 218; that span reads EDF. Residue threonine 66 participates in Mg(2+) binding. The tract at residues 182–252 is small ATPAse domain (RuvB-S); the sequence is THDELAFIVT…VVQETLRLLE (71 aa). Residues 255 to 338 form a head domain (RuvB-H) region; it reads EMGFDQMDRM…TPERPQGSLF (84 aa). The DNA site is built by arginine 310 and arginine 315.

Belongs to the RuvB family. Homohexamer. Forms an RuvA(8)-RuvB(12)-Holliday junction (HJ) complex. HJ DNA is sandwiched between 2 RuvA tetramers; dsDNA enters through RuvA and exits via RuvB. An RuvB hexamer assembles on each DNA strand where it exits the tetramer. Each RuvB hexamer is contacted by two RuvA subunits (via domain III) on 2 adjacent RuvB subunits; this complex drives branch migration. In the full resolvosome a probable DNA-RuvA(4)-RuvB(12)-RuvC(2) complex forms which resolves the HJ.

It is found in the cytoplasm. The enzyme catalyses ATP + H2O = ADP + phosphate + H(+). Functionally, the RuvA-RuvB-RuvC complex processes Holliday junction (HJ) DNA during genetic recombination and DNA repair, while the RuvA-RuvB complex plays an important role in the rescue of blocked DNA replication forks via replication fork reversal (RFR). RuvA specifically binds to HJ cruciform DNA, conferring on it an open structure. The RuvB hexamer acts as an ATP-dependent pump, pulling dsDNA into and through the RuvAB complex. RuvB forms 2 homohexamers on either side of HJ DNA bound by 1 or 2 RuvA tetramers; 4 subunits per hexamer contact DNA at a time. Coordinated motions by a converter formed by DNA-disengaged RuvB subunits stimulates ATP hydrolysis and nucleotide exchange. Immobilization of the converter enables RuvB to convert the ATP-contained energy into a lever motion, pulling 2 nucleotides of DNA out of the RuvA tetramer per ATP hydrolyzed, thus driving DNA branch migration. The RuvB motors rotate together with the DNA substrate, which together with the progressing nucleotide cycle form the mechanistic basis for DNA recombination by continuous HJ branch migration. Branch migration allows RuvC to scan DNA until it finds its consensus sequence, where it cleaves and resolves cruciform DNA. The polypeptide is Holliday junction branch migration complex subunit RuvB (Trichlorobacter lovleyi (strain ATCC BAA-1151 / DSM 17278 / SZ) (Geobacter lovleyi)).